Reading from the N-terminus, the 530-residue chain is Copine-B (530 aa).

2 C2 domains span residues Met1–Lys125 and Glu130–Asn253. 5 residues coordinate Ca(2+): Asp25, Asp31, Asp85, Asp87, and Asp100. The 220-residue stretch at Asn294 to Leu513 folds into the VWFA domain.

The protein belongs to the copine family. The cofactor is Ca(2+).

The protein is Copine-B (cpnB-1) of Dictyostelium discoideum (Social amoeba).